Here is a 343-residue protein sequence, read N- to C-terminus: Farnesyl pyrophosphate synthase (343 aa).

Isopentenyl diphosphate contacts are provided by K49, R52, and Q87. Mg(2+) contacts are provided by D94 and D98. R103 lines the dimethylallyl diphosphate pocket. Residue R104 participates in isopentenyl diphosphate binding. Positions 191, 192, 230, 247, and 256 each coordinate dimethylallyl diphosphate.

This sequence belongs to the FPP/GGPP synthase family. It depends on Mg(2+) as a cofactor. In terms of tissue distribution, expressed both in apical and sub-apical cells of glandular secretory trichomes.

It localises to the cytoplasm. It is found in the nucleus. It carries out the reaction isopentenyl diphosphate + dimethylallyl diphosphate = (2E)-geranyl diphosphate + diphosphate. It catalyses the reaction isopentenyl diphosphate + (2E)-geranyl diphosphate = (2E,6E)-farnesyl diphosphate + diphosphate. Its pathway is isoprenoid biosynthesis; farnesyl diphosphate biosynthesis; farnesyl diphosphate from geranyl diphosphate and isopentenyl diphosphate: step 1/1. It functions in the pathway sesquiterpene biosynthesis. It participates in isoprenoid biosynthesis; geranyl diphosphate biosynthesis; geranyl diphosphate from dimethylallyl diphosphate and isopentenyl diphosphate: step 1/1. Its function is as follows. Involved in the biosynthesis of the antimalarial endoperoxide artemisinin. Catalyzes the sequential condensation of isopentenyl pyrophosphate with the allylic pyrophosphates, dimethylallyl pyrophosphate, and then with the resultant geranylpyrophosphate to the ultimate product farnesyl pyrophosphate. Promotes anti-malarial and antimicrobial (toward Gram-positive bacteria B.subtilis and S.aureus) activities of plant crude extract probably by triggering artemisinin levels. The protein is Farnesyl pyrophosphate synthase of Artemisia annua (Sweet wormwood).